Consider the following 464-residue polypeptide: E3 ubiquitin-protein ligase TRAIP (464 aa).

The RING-type; atypical zinc-finger motif lies at 7–50 (CTICSDFFDNARDVAAITCGHTFHQECLLQWFHSAPHRTCPQCR). Coiled coils occupy residues 142 to 186 (LDKQ…MIRD) and 236 to 277 (AQKA…LQKT). The tract at residues 439–464 (KRKKVSRPTACTSSLANQPRLEDFLK) is disordered. The PIP-box motif lies at 456-464 (QPRLEDFLK).

It belongs to the TRAIP family.

It localises to the nucleus. Its subcellular location is the nucleoplasm. It is found in the nucleolus. The protein localises to the chromosome. The protein resides in the cytoplasm. The enzyme catalyses S-ubiquitinyl-[E2 ubiquitin-conjugating enzyme]-L-cysteine + [acceptor protein]-L-lysine = [E2 ubiquitin-conjugating enzyme]-L-cysteine + N(6)-ubiquitinyl-[acceptor protein]-L-lysine.. It participates in protein modification; protein ubiquitination. Functionally, E3 ubiquitin ligase required to protect genome stability in response to replication stress. Acts as a key regulator of interstrand cross-link repair, which takes place when both strands of duplex DNA are covalently tethered together, thereby blocking replication and transcription. Controls the choice between the two pathways of replication-coupled interstrand-cross-link repair by mediating ubiquitination of mcm7 subunit of the CMG helicase complex. Short ubiquitin chains on mcm7 promote recruitment of DNA glycosylase neil3. If the interstrand cross-link cannot be cleaved by neil3, the ubiquitin chains continue to grow on mcm7, promoting the unloading of the CMG helicase complex by the vcp/p97 ATPase, enabling the Fanconi anemia DNA repair pathway. Only catalyzes ubiquitination of mcm7 when forks converge. Also involved in the repair of covalent DNA-protein cross-links (DPCs) during DNA synthesis: promotes ubiquitination of DPCs, leading to their degradation by the proteasome. Also acts as a negative regulator of innate immune signaling by inhibiting activation of NF-kappa-B mediated by TNF. This chain is E3 ubiquitin-protein ligase TRAIP, found in Xenopus laevis (African clawed frog).